The following is a 308-amino-acid chain: 4-hydroxyproline 2-epimerase (308 aa).

Cys88 (proton acceptor) is an active-site residue. Residues 89–90 (GH), His208, and Asp232 contribute to the substrate site. Cys236 serves as the catalytic Proton donor. 237 to 238 (GT) contacts substrate.

Belongs to the proline racemase family.

It carries out the reaction trans-4-hydroxy-L-proline = cis-4-hydroxy-D-proline. In terms of biological role, catalyzes the epimerization of trans-4-hydroxy-L-proline (t4LHyp) to cis-4-hydroxy-D-proline (c4DHyp). Is likely involved in a degradation pathway that converts t4LHyp to alpha-ketoglutarate. Can also catalyze the epimerization of trans-3-hydroxy-L-proline (t3LHyp) to cis-3-hydroxy-D-proline (c3DHyp), albeit with 200-fold lower efficiency. The protein is 4-hydroxyproline 2-epimerase of Pseudomonas putida (strain ATCC 700007 / DSM 6899 / JCM 31910 / BCRC 17059 / LMG 24140 / F1).